We begin with the raw amino-acid sequence, 197 residues long: Putative methyltransferase Mtx subunit A (197 aa).

It belongs to the MtrA family. May be part of a complex composed of 3 subunits; MtxA, MtxH and MtxX.

This is Putative methyltransferase Mtx subunit A (mtxA) from Methanosarcina barkeri (strain Fusaro / DSM 804).